We begin with the raw amino-acid sequence, 391 residues long: DNA replication and repair protein RecF (391 aa).

30–37 (GLNGQGKT) contacts ATP.

The protein belongs to the RecF family.

It is found in the cytoplasm. Its function is as follows. The RecF protein is involved in DNA metabolism; it is required for DNA replication and normal SOS inducibility. RecF binds preferentially to single-stranded, linear DNA. It also seems to bind ATP. The sequence is that of DNA replication and repair protein RecF from Kineococcus radiotolerans (strain ATCC BAA-149 / DSM 14245 / SRS30216).